The following is a 143-amino-acid chain: D-aminoacyl-tRNA deacylase (143 aa).

The Gly-cisPro motif, important for rejection of L-amino acids signature appears at 135-136; it reads GP.

Belongs to the DTD family. Homodimer.

It localises to the cytoplasm. The enzyme catalyses glycyl-tRNA(Ala) + H2O = tRNA(Ala) + glycine + H(+). It carries out the reaction a D-aminoacyl-tRNA + H2O = a tRNA + a D-alpha-amino acid + H(+). Functionally, an aminoacyl-tRNA editing enzyme that deacylates mischarged D-aminoacyl-tRNAs. Also deacylates mischarged glycyl-tRNA(Ala), protecting cells against glycine mischarging by AlaRS. Acts via tRNA-based rather than protein-based catalysis; rejects L-amino acids rather than detecting D-amino acids in the active site. By recycling D-aminoacyl-tRNA to D-amino acids and free tRNA molecules, this enzyme counteracts the toxicity associated with the formation of D-aminoacyl-tRNA entities in vivo and helps enforce protein L-homochirality. The sequence is that of D-aminoacyl-tRNA deacylase from Mycobacterium bovis (strain ATCC BAA-935 / AF2122/97).